The sequence spans 183 residues: CASP-like protein UU1 (183 aa).

Over 1 to 33 (MEESQQQSTKFDAPPSPYVPSRVYLAQIYWKKP) the chain is Cytoplasmic. Residues 34-54 (AIVVLRVLQFVFSLIAFSVMA) traverse the membrane as a helical segment. Residues 55–72 (DLLHDVQGSIKSLSYTVA) lie on the Extracellular side of the membrane. A helical transmembrane segment spans residues 73–93 (IGVLACAYALAQLSFSLWCVI). Topologically, residues 94–118 (RGATSSSGVTPLYQYATFICDQMST) are cytoplasmic. Residues 119–139 (YFLISAASATATLIDVSGVCG) traverse the membrane as a helical segment. Over 140 to 156 (SNGSGTNLCSRSTASVT) the chain is Extracellular. Asn141 carries N-linked (GlcNAc...) asparagine glycosylation. A helical membrane pass occupies residues 157-177 (FAFLAFLAFSASSVLTGYYLV). Over 178–183 (KCILKA) the chain is Cytoplasmic.

This sequence belongs to the Casparian strip membrane proteins (CASP) family. As to quaternary structure, homodimer and heterodimers.

The protein resides in the cell membrane. The polypeptide is CASP-like protein UU1 (Selaginella moellendorffii (Spikemoss)).